The sequence spans 332 residues: Succinylglutamate desuccinylase (332 aa).

The Zn(2+) site is built by H59, E62, and H151. Residue E215 is part of the active site.

It belongs to the AspA/AstE family. Succinylglutamate desuccinylase subfamily. Requires Zn(2+) as cofactor.

It catalyses the reaction N-succinyl-L-glutamate + H2O = L-glutamate + succinate. It functions in the pathway amino-acid degradation; L-arginine degradation via AST pathway; L-glutamate and succinate from L-arginine: step 5/5. Functionally, transforms N(2)-succinylglutamate into succinate and glutamate. The polypeptide is Succinylglutamate desuccinylase (Pseudomonas paraeruginosa (strain DSM 24068 / PA7) (Pseudomonas aeruginosa (strain PA7))).